A 96-amino-acid polypeptide reads, in one-letter code: Co-chaperonin GroES (96 aa).

Belongs to the GroES chaperonin family. Heptamer of 7 subunits arranged in a ring. Interacts with the chaperonin GroEL.

Its subcellular location is the cytoplasm. Functionally, together with the chaperonin GroEL, plays an essential role in assisting protein folding. The GroEL-GroES system forms a nano-cage that allows encapsulation of the non-native substrate proteins and provides a physical environment optimized to promote and accelerate protein folding. GroES binds to the apical surface of the GroEL ring, thereby capping the opening of the GroEL channel. This chain is Co-chaperonin GroES, found in Acidithiobacillus ferrooxidans (strain ATCC 23270 / DSM 14882 / CIP 104768 / NCIMB 8455) (Ferrobacillus ferrooxidans (strain ATCC 23270)).